The primary structure comprises 341 residues: Casein kinase I isoform alpha (341 aa).

The Protein kinase domain maps to 16 to 284 (YKLIRKIGSG…YLRQLFRILF (269 aa)). Residues 22 to 30 (IGSGSFGDI) and Lys-45 contribute to the ATP site. The active-site Proton acceptor is Asp-135. The segment covering 306 to 320 (QSQSSGVPGTNTTTQ) has biased composition (polar residues). The segment at 306–341 (QSQSSGVPGTNTTTQGATVPSAGVPAGVAPGGTTPQ) is disordered. Positions 321-341 (GATVPSAGVPAGVAPGGTTPQ) are enriched in low complexity.

The protein belongs to the protein kinase superfamily. CK1 Ser/Thr protein kinase family. Casein kinase I subfamily.

The catalysed reaction is L-seryl-[protein] + ATP = O-phospho-L-seryl-[protein] + ADP + H(+). The enzyme catalyses L-threonyl-[protein] + ATP = O-phospho-L-threonyl-[protein] + ADP + H(+). The chain is Casein kinase I isoform alpha (kin-19) from Caenorhabditis elegans.